A 78-amino-acid polypeptide reads, in one-letter code: uncharacterized protein (78 aa).

This is an uncharacterized protein from Amsacta (AmEPV).